A 267-amino-acid polypeptide reads, in one-letter code: Diphthine synthase (267 aa).

Residues leucine 9, aspartate 85, valine 88, 113-114 (SI), leucine 170, alanine 211, and histidine 236 contribute to the S-adenosyl-L-methionine site.

The protein belongs to the diphthine synthase family. Homodimer.

The catalysed reaction is 2-[(3S)-amino-3-carboxypropyl]-L-histidyl-[translation elongation factor 2] + 3 S-adenosyl-L-methionine = diphthine-[translation elongation factor 2] + 3 S-adenosyl-L-homocysteine + 3 H(+). The protein operates within protein modification; peptidyl-diphthamide biosynthesis. S-adenosyl-L-methionine-dependent methyltransferase that catalyzes the trimethylation of the amino group of the modified target histidine residue in translation elongation factor 2 (EF-2), to form an intermediate called diphthine. The three successive methylation reactions represent the second step of diphthamide biosynthesis. This chain is Diphthine synthase, found in Methanococcoides burtonii (strain DSM 6242 / NBRC 107633 / OCM 468 / ACE-M).